Here is a 215-residue protein sequence, read N- to C-terminus: Vesicle transport protein SFT2C (215 aa).

At 1-82 the chain is on the cytoplasmic side; the sequence is MADLHRQLQE…RGQRLAAGGG (82 aa). A helical membrane pass occupies residues 83 to 103; the sequence is CLLLAALCFGLAALYAPVLLL. Over 104 to 107 the chain is Lumenal; it reads RARK. A helical membrane pass occupies residues 108–128; the sequence is FALLWSLGSALALAGSALLRG. The Cytoplasmic segment spans residues 129-142; that stretch reads GAACGRLLRCEEAP. Residues 143–163 form a helical membrane-spanning segment; sequence SRPALLYMAALGATLFAALGL. The Lumenal portion of the chain corresponds to 164–166; the sequence is RST. Residues 167 to 187 form a helical membrane-spanning segment; the sequence is LLTVLGAGAQVAALLAALVGL. Over 188–215 the chain is Cytoplasmic; that stretch reads LPWGGGTALRLALGRLGRGAGLAKVLPV.

It belongs to the SFT2 family.

Its subcellular location is the membrane. May be involved in fusion of retrograde transport vesicles derived from an endocytic compartment with the Golgi complex. The protein is Vesicle transport protein SFT2C of Homo sapiens (Human).